A 372-amino-acid polypeptide reads, in one-letter code: Innexin shaking-B (372 aa).

Topologically, residues M1–S21 are cytoplasmic. A helical transmembrane segment spans residues I22–I42. Residues T43–Y110 lie on the Extracellular side of the membrane. A helical membrane pass occupies residues Q111–W131. Residues K132–Y182 lie on the Cytoplasmic side of the membrane. Residues V183 to F203 traverse the membrane as a helical segment. The Extracellular portion of the chain corresponds to D204–K267. The chain crosses the membrane as a helical span at residues I268–I288. Over Y289 to A372 the chain is Cytoplasmic.

The protein belongs to the pannexin family. As to quaternary structure, monomer (isoform Lethal). In terms of tissue distribution, isoform Neural is expressed in synapses of giant fibers (GF), in a large thoracic cell in location of postsynaptic target and optic lobe lamina and medulla. Isoform Lethal is expressed in embryonic mesodermal derivatives. During metamorphosis, both isoforms are dynamically expressed in pupal nervous system.

The protein resides in the cell membrane. Its subcellular location is the cell junction. The protein localises to the gap junction. Structural component of the gap junctions at electrical synapses in distal and mid-depth levels in the lamina. Isoform Lethal forms voltage sensitive intercellular channels through homotypic interactions. In Drosophila melanogaster (Fruit fly), this protein is Innexin shaking-B (shakB).